A 638-amino-acid polypeptide reads, in one-letter code: Chaperone protein DnaK (638 aa).

Thr-199 carries the phosphothreonine; by autocatalysis modification. The segment covering 603–618 (YAQPGAEAGAEQQGSA) has biased composition (low complexity). Residues 603 to 638 (YAQPGAEAGAEQQGSANNADDDIVDAEFEEVNDDKK) are disordered. Acidic residues predominate over residues 621–638 (ADDDIVDAEFEEVNDDKK).

Belongs to the heat shock protein 70 family.

Functionally, acts as a chaperone. This chain is Chaperone protein DnaK, found in Hydrogenovibrio crunogenus (strain DSM 25203 / XCL-2) (Thiomicrospira crunogena).